Here is a 337-residue protein sequence, read N- to C-terminus: RNA 3'-terminal phosphate cyclase (337 aa).

ATP contacts are provided by residues Gln-101 and 282 to 285 (HMSD). His-306 serves as the catalytic Tele-AMP-histidine intermediate.

This sequence belongs to the RNA 3'-terminal cyclase family. Type 1 subfamily.

It localises to the cytoplasm. It catalyses the reaction a 3'-end 3'-phospho-ribonucleotide-RNA + ATP = a 3'-end 2',3'-cyclophospho-ribonucleotide-RNA + AMP + diphosphate. Catalyzes the conversion of 3'-phosphate to a 2',3'-cyclic phosphodiester at the end of RNA. The mechanism of action of the enzyme occurs in 3 steps: (A) adenylation of the enzyme by ATP; (B) transfer of adenylate to an RNA-N3'P to produce RNA-N3'PP5'A; (C) and attack of the adjacent 2'-hydroxyl on the 3'-phosphorus in the diester linkage to produce the cyclic end product. The biological role of this enzyme is unknown but it is likely to function in some aspects of cellular RNA processing. The protein is RNA 3'-terminal phosphate cyclase of Saccharolobus islandicus (strain M.16.27) (Sulfolobus islandicus).